The chain runs to 948 residues: Isoleucine--tRNA ligase (948 aa).

The 'HIGH' region motif lies at 58–68 (PYANGSIHIGH). Glutamate 572 contributes to the L-isoleucyl-5'-AMP binding site. A 'KMSKS' region motif is present at residues 613–617 (KMSKS). Lysine 616 is a binding site for ATP. The Zn(2+) site is built by cysteine 911, cysteine 914, cysteine 931, and cysteine 934.

The protein belongs to the class-I aminoacyl-tRNA synthetase family. IleS type 1 subfamily. In terms of assembly, monomer. The cofactor is Zn(2+).

It is found in the cytoplasm. It catalyses the reaction tRNA(Ile) + L-isoleucine + ATP = L-isoleucyl-tRNA(Ile) + AMP + diphosphate. Its function is as follows. Catalyzes the attachment of isoleucine to tRNA(Ile). As IleRS can inadvertently accommodate and process structurally similar amino acids such as valine, to avoid such errors it has two additional distinct tRNA(Ile)-dependent editing activities. One activity is designated as 'pretransfer' editing and involves the hydrolysis of activated Val-AMP. The other activity is designated 'posttransfer' editing and involves deacylation of mischarged Val-tRNA(Ile). The polypeptide is Isoleucine--tRNA ligase (Edwardsiella ictaluri (strain 93-146)).